Consider the following 187-residue polypeptide: Large ribosomal subunit protein bL25 (187 aa).

It belongs to the bacterial ribosomal protein bL25 family. CTC subfamily. As to quaternary structure, part of the 50S ribosomal subunit; part of the 5S rRNA/L5/L18/L25 subcomplex. Contacts the 5S rRNA. Binds to the 5S rRNA independently of L5 and L18.

In terms of biological role, this is one of the proteins that binds to the 5S RNA in the ribosome where it forms part of the central protuberance. This is Large ribosomal subunit protein bL25 from Tropheryma whipplei (strain Twist) (Whipple's bacillus).